Here is a 435-residue protein sequence, read N- to C-terminus: Glutamyl-tRNA reductase (435 aa).

Residues 49-52, Ser-118, 123-125, and Gln-129 each bind substrate; these read TCNR and EPQ. Cys-50 (nucleophile) is an active-site residue. 203–208 provides a ligand contact to NADP(+); the sequence is GAGETI.

Belongs to the glutamyl-tRNA reductase family. Homodimer.

The catalysed reaction is (S)-4-amino-5-oxopentanoate + tRNA(Glu) + NADP(+) = L-glutamyl-tRNA(Glu) + NADPH + H(+). It participates in porphyrin-containing compound metabolism; protoporphyrin-IX biosynthesis; 5-aminolevulinate from L-glutamyl-tRNA(Glu): step 1/2. Its function is as follows. Catalyzes the NADPH-dependent reduction of glutamyl-tRNA(Glu) to glutamate 1-semialdehyde (GSA). The protein is Glutamyl-tRNA reductase of Glaesserella parasuis serovar 5 (strain SH0165) (Haemophilus parasuis).